The following is a 664-amino-acid chain: SPARC-like protein 1 (664 aa).

Residues 1–16 (MKTGLFFLCLLGTAAA) form the signal peptide. The O-glycosylated at one additional site stretch occupies residues 25–34 (SDHSKPTAET). A disordered region spans residues 28–360 (SKPTAETVAP…DGPRHSASDD (333 aa)). 2 O-linked (GalNAc...) threonine glycosylation sites follow: Thr-31 and Thr-40. O-linked (GalNAc...) serine glycosylation is present at Ser-44. Over residues 62 to 84 (DDSHHKAEKSSVLKSKEESHEQS) the composition is skewed to basic and acidic residues. A phosphoserine mark is found at Ser-76, Ser-84, and Ser-92. Residues 85–94 (AEQGKSSSQE) are compositionally biased toward polar residues. The span at 96–105 (GLKDQEDSDG) shows a compositional bias: basic and acidic residues. O-linked (GalNAc...) threonine glycosylation occurs at Thr-116. A compositionally biased stretch (basic and acidic residues) spans 120 to 136 (LDIKEDMSEPQEKKLSE). Polar residues predominate over residues 146 to 156 (SSFTDSNQQES). Residue Asn-169 is glycosylated (N-linked (GlcNAc...) asparagine). Residues 170–180 (YSHHQLNRSSK) show a composition bias toward basic residues. Phosphoserine is present on Ser-171. Residues Asn-176 and Asn-196 are each glycosylated (N-linked (GlcNAc...) asparagine). Polar residues predominate over residues 188–199 (QGNQEQDPNISN). The span at 216–235 (DNQERKTELPREHANSKQEE) shows a compositional bias: basic and acidic residues. Composition is skewed to acidic residues over residues 236 to 248 (DNTQ…EESD) and 259 to 280 (DEFD…EEEN). Residue Ser-272 is modified to Phosphoserine. Asn-280 carries an N-linked (GlcNAc...) asparagine glycan. Residues 306-316 (SNHKETEEKTV) show a composition bias toward basic and acidic residues. The O-linked (GalNAc...) threonine glycan is linked to Thr-331. Positions 339–349 (DDGDDDGDDGG) are enriched in acidic residues. Ser-358 and Ser-365 each carry phosphoserine. The interval 388-426 (EKVHENENIGTTEPGEHQEAKKAENSSNEEETSSEGNMR) is disordered. Thr-398 carries an O-linked (GalNAc...) threonine glycan. A compositionally biased stretch (basic and acidic residues) spans 401-411 (PGEHQEAKKAE). An N-linked (GlcNAc...) asparagine glycan is attached at Asn-412. The residue at position 420 (Ser-420) is a Phosphoserine. Positions 432-454 (SCMSFQCKRGHICKADQQGKPHC) constitute a Follistatin-like domain. 7 cysteine pairs are disulfide-bonded: Cys-433–Cys-444, Cys-438–Cys-454, Cys-456–Cys-490, Cys-462–Cys-483, Cys-472–Cys-509, Cys-515–Cys-626, and Cys-634–Cys-650. The 62-residue stretch at 450 to 511 (GKPHCVCQDP…QLDYFGACKS (62 aa)) folds into the Kazal-like domain. The N-linked (GlcNAc...) asparagine glycan is linked to Asn-476. The region spanning 622-657 (PMEHCITRFFEECDPNKDKHITLKEWGHCFGIKEED) is the EF-hand domain. Ca(2+) contacts are provided by Asp-635, Asn-637, Asp-639, His-641, and Glu-646.

It belongs to the SPARC family. N- and O-glycosylated. O-glycosylated with a core 1 or possibly core 8 glycan. Highly expressed in lymph node, brain, heart, lung, skeletal muscle, ovary, small intestine, and colon, with lower levels in placenta, pancreas, testis, spleen, and thymus, and no expression in kidney, liver, and peripheral blood leukocytes.

The protein resides in the secreted. It localises to the extracellular space. It is found in the extracellular matrix. In Homo sapiens (Human), this protein is SPARC-like protein 1 (SPARCL1).